Consider the following 189-residue polypeptide: Pyridoxal 5'-phosphate synthase subunit PdxT (189 aa).

Residue 47–49 participates in L-glutamine binding; it reads GES. The active-site Nucleophile is Cys79. L-glutamine-binding positions include Arg105 and 132 to 133; that span reads IR. Residues His168 and Glu170 each act as charge relay system in the active site.

Belongs to the glutaminase PdxT/SNO family. As to quaternary structure, in the presence of PdxS, forms a dodecamer of heterodimers. Only shows activity in the heterodimer.

It carries out the reaction aldehydo-D-ribose 5-phosphate + D-glyceraldehyde 3-phosphate + L-glutamine = pyridoxal 5'-phosphate + L-glutamate + phosphate + 3 H2O + H(+). The enzyme catalyses L-glutamine + H2O = L-glutamate + NH4(+). Its pathway is cofactor biosynthesis; pyridoxal 5'-phosphate biosynthesis. Catalyzes the hydrolysis of glutamine to glutamate and ammonia as part of the biosynthesis of pyridoxal 5'-phosphate. The resulting ammonia molecule is channeled to the active site of PdxS. This is Pyridoxal 5'-phosphate synthase subunit PdxT from Methanocorpusculum labreanum (strain ATCC 43576 / DSM 4855 / Z).